The chain runs to 255 residues: 2-(S)-hydroxypropyl-CoM dehydrogenase 3 (255 aa).

NAD(+) is bound by residues isoleucine 19, aspartate 38, 64 to 65 (DV), and asparagine 91. Positions 143 and 156 each coordinate (S)-2-hydroxypropyl-coenzyme M. Tyrosine 156 functions as the Proton acceptor in the catalytic mechanism. Lysine 160 provides a ligand contact to NAD(+). Threonine 188 serves as a coordination point for (S)-2-hydroxypropyl-coenzyme M. NAD(+) is bound at residue 189-193 (VTSTG). Tyrosine 215 lines the (S)-2-hydroxypropyl-coenzyme M pocket.

Belongs to the short-chain dehydrogenases/reductases (SDR) family. Homotetramer.

It catalyses the reaction (S)-2-hydroxypropyl-coenzyme M + NAD(+) = 2-oxopropyl-coenzyme M + NADH + H(+). With respect to regulation, not inhibited by 2-(2-methyl-2-hydroxypropylthio)ethanesulfonate (M-HPC), an achiral analog of both R-HPC and S-HPC. In terms of biological role, involved in aliphatic epoxide carboxylation. Catalyzes the reversible oxidation of (2S)-2-hydroxypropyl-coenzyme M (S-HPC) to 2-oxopropyl-coenzyme M (2-KPC). The enzyme is highly specific for the S enantiomers. In vitro can also use the aliphatic ketone 2-butanone and the aliphatic alcohol 2-propanol, and shows an inherent stereoselectivity for 2-butanone reduction. In Xanthobacter autotrophicus (strain ATCC BAA-1158 / Py2), this protein is 2-(S)-hydroxypropyl-CoM dehydrogenase 3.